Here is a 316-residue protein sequence, read N- to C-terminus: MAATKDRQLFRHLLRLSRFDRYNPLFTTFAGLWSTLLAGGAKMAEQRSDMSVATVFQQCALCFVASYLFCGAGMVWNDWIDRDIDANVARTKERPLASGKVTATEAMVWMVLQAALSWGVLEVMLDGKDVAKHFIPVAAASVLYPFGKRSLARMLGIYPQYILAFTIAWPAVIGRAAIYGQYESYAETLRQCLPLCTMVFFWTIYLNTAYSYQDVVDDRKLGVNSFYNIAGKHIHLLLVALVSPILVCLPIYLFELHSLWLWLSWMGVWTASLAQQLVQFDPKQPASGGSIHRSNFILGIWTILACVVQVFLTGSA.

8 helical membrane passes run proline 24–alanine 44, alanine 60–isoleucine 80, glutamate 105–leucine 125, methionine 154–glycine 174, cysteine 192–tyrosine 212, isoleucine 234–phenylalanine 254, serine 258–valine 278, and phenylalanine 296–alanine 316.

Belongs to the UbiA prenyltransferase family. The cofactor is Mg(2+).

Its subcellular location is the membrane. Its pathway is secondary metabolite biosynthesis; terpenoid biosynthesis. Its function is as follows. Polyprenyl transferase; part of the gene cluster that mediates the biosynthesis of the diterpenoid pyrones higginsianins A and B. The first step of the pathway is the synthesis of the alpha-pyrone moiety by the polyketide synthase dpchA via condensation of one acetyl-CoA starter unit with 3 malonyl-CoA units and 2 methylations. The alpha-pyrone is then combined with geranylgeranyl pyrophosphate (GGPP) formed by the GGPP synthase dpchD through the action of the prenyltransferase dpchC to yield a linear alpha-pyrone diterpenoid. Subsequent steps in the diterpenoid pyrone biosynthetic pathway involve the decalin core formation, which is initiated by the epoxidation of the C10-C11 olefin by the FAD-dependent oxidoreductase dpchE, and is followed by a cyclization cascade catalyzed by the terpene cyclase dpchB. The short chain dehydrogenase/reductase dpchG then oxidizes the 8S hydroxy group to a ketone and the short chain dehydrogenase/reductase dpchH reduces the ketone to the 8R hydroxy group to yield higginsianin B. Finally, the FAD-dependent oxidoreductase dpchF converts higginsianin B into higginsianin A. In Colletotrichum higginsianum (strain IMI 349063) (Crucifer anthracnose fungus), this protein is Polyprenyl transferase dpchC.